A 291-amino-acid chain; its full sequence is Signal peptidase I (291 aa).

Over Met1 to Ser45 the chain is Cytoplasmic. A helical transmembrane segment spans residues Phe46–Val66. Residues Pro67–Asp291 lie on the Periplasmic side of the membrane. Residues Ser70 and Lys133 contribute to the active site.

Belongs to the peptidase S26 family.

The protein localises to the cell inner membrane. It carries out the reaction Cleavage of hydrophobic, N-terminal signal or leader sequences from secreted and periplasmic proteins.. This Rickettsia bellii (strain RML369-C) protein is Signal peptidase I (lepB).